Here is a 307-residue protein sequence, read N- to C-terminus: MTSRPSSDQTWQPIDGRVALIAPASAIATDVLEATLRQLEVHGVDYHLGRHVEARYRYLAGTVEQRLEDLHNAFDMPDITAVWCLRGGYGCGQLLPGLDWGRLQAASPRPLIGFSDISVLLSAFHRHGLPAIHGPVATGLGLSPLSAPREQQERLASLASVSRLLAGIDHELPVQHLGGHKQRVEGALIGGNLTALACMAGTLGGLHAPAGSILVLEDVGEPYYRLERSLWQLLESIDARQLGAICLGSFTDCPRKEVAHSLERIFGEYAAAIEVPLYHHLPSGHGAQNRAWPYGKTAVLEGNRLRW.

Ser-115 (nucleophile) is an active-site residue. Catalysis depends on charge relay system residues Glu-217 and His-285.

The protein belongs to the peptidase S66 family. In terms of assembly, homodimer.

Its subcellular location is the cytoplasm. It catalyses the reaction N-acetyl-D-glucosaminyl-N-acetylmuramoyl-L-alanyl-meso-2,6-diaminoheptanedioyl-D-alanine + H2O = N-acetyl-D-glucosaminyl-N-acetylmuramoyl-L-alanyl-meso-2,6-diaminoheptanedioate + D-alanine. Its pathway is cell wall biogenesis; peptidoglycan recycling. Functionally, releases the terminal D-alanine residue from the cytoplasmic disaccharide-tetrapeptide GlcNAc-MurNAc-L-Ala-gamma-D-Glu-meso-Dap-D-Ala, which is a murein turnover product. Probably also act on free tetrapetide. May be involved in murein recycling. This is Murein tetrapeptide carboxypeptidase from Pseudomonas aeruginosa (strain ATCC 15692 / DSM 22644 / CIP 104116 / JCM 14847 / LMG 12228 / 1C / PRS 101 / PAO1).